Reading from the N-terminus, the 218-residue chain is uncharacterized protein (218 aa).

The protein belongs to the HAD-like hydrolase superfamily.

It localises to the cytoplasm. The protein localises to the nucleus. This is an uncharacterized protein from Saccharomyces cerevisiae (strain ATCC 204508 / S288c) (Baker's yeast).